The following is a 357-amino-acid chain: Arginine kinase (357 aa).

Residues 9-91 (KLEAGFKKLQ…FNPIIEDYHE (83 aa)) form the Phosphagen kinase N-terminal domain. 64 to 66 (GVG) contacts L-arginine. A Phosphagen kinase C-terminal domain is found at 119–356 (YVVSTHVRCG…LEMIKMEEAA (238 aa)). ATP contacts are provided by residues 122-126 (STHVR) and histidine 185. Glutamate 225 contributes to the L-arginine binding site. Arginine 229 provides a ligand contact to ATP. Position 271 (cysteine 271) interacts with L-arginine. ATP contacts are provided by residues 280 to 284 (RASVH) and 309 to 314 (RGTRGE).

It belongs to the ATP:guanido phosphotransferase family.

The enzyme catalyses L-arginine + ATP = N(omega)-phospho-L-arginine + ADP + H(+). Functionally, catalyzes the reversible transfer of high energy ATP gamma-phosphate group to L-arginine. This Polybetes pythagoricus (South American huntsman spider) protein is Arginine kinase.